Reading from the N-terminus, the 315-residue chain is Nucleotide-binding protein PsycPRwf_2129 (315 aa).

ATP is bound at residue 29–36 (GRSGSGKT). 79 to 82 (DIRT) serves as a coordination point for GTP.

The protein belongs to the RapZ-like family.

Its function is as follows. Displays ATPase and GTPase activities. This Psychrobacter sp. (strain PRwf-1) protein is Nucleotide-binding protein PsycPRwf_2129.